Here is a 557-residue protein sequence, read N- to C-terminus: TBCC domain-containing protein 1 (557 aa).

In terms of domain architecture, C-CAP/cofactor C-like spans Thr-290–Leu-435.

This sequence belongs to the TBCC family.

The protein localises to the cytoplasm. It localises to the cytoskeleton. The protein resides in the microtubule organizing center. Its subcellular location is the centrosome. It is found in the spindle pole. Plays a role in the regulation of centrosome and Golgi apparatus positioning, with consequences on cell shape and cell migration. This is TBCC domain-containing protein 1 (TBCCD1) from Homo sapiens (Human).